A 335-amino-acid polypeptide reads, in one-letter code: S-adenosylmethionine:tRNA ribosyltransferase-isomerase (335 aa).

It belongs to the QueA family. In terms of assembly, monomer.

Its subcellular location is the cytoplasm. The enzyme catalyses 7-aminomethyl-7-carbaguanosine(34) in tRNA + S-adenosyl-L-methionine = epoxyqueuosine(34) in tRNA + adenine + L-methionine + 2 H(+). It functions in the pathway tRNA modification; tRNA-queuosine biosynthesis. Transfers and isomerizes the ribose moiety from AdoMet to the 7-aminomethyl group of 7-deazaguanine (preQ1-tRNA) to give epoxyqueuosine (oQ-tRNA). This is S-adenosylmethionine:tRNA ribosyltransferase-isomerase from Thermosipho africanus (strain TCF52B).